We begin with the raw amino-acid sequence, 1412 residues long: DNA-directed RNA polymerase subunit beta' (1412 aa).

Cysteine 70, cysteine 72, cysteine 85, and cysteine 88 together coordinate Zn(2+). Residues aspartate 458, aspartate 460, and aspartate 462 each contribute to the Mg(2+) site. Zn(2+) is bound by residues cysteine 813, cysteine 887, cysteine 894, and cysteine 897. The disordered stretch occupies residues 1388-1412 (EQALLTPATTAEAVVGEEPAPPPAQ). Low complexity predominate over residues 1393 to 1405 (TPATTAEAVVGEE).

Belongs to the RNA polymerase beta' chain family. As to quaternary structure, the RNAP catalytic core consists of 2 alpha, 1 beta, 1 beta' and 1 omega subunit. When a sigma factor is associated with the core the holoenzyme is formed, which can initiate transcription. Mg(2+) serves as cofactor. It depends on Zn(2+) as a cofactor.

It catalyses the reaction RNA(n) + a ribonucleoside 5'-triphosphate = RNA(n+1) + diphosphate. In terms of biological role, DNA-dependent RNA polymerase catalyzes the transcription of DNA into RNA using the four ribonucleoside triphosphates as substrates. The polypeptide is DNA-directed RNA polymerase subunit beta' (Methylibium petroleiphilum (strain ATCC BAA-1232 / LMG 22953 / PM1)).